A 423-amino-acid polypeptide reads, in one-letter code: 58 kDa phosphoprotein (423 aa).

Residues 46-60 (KMGYEKMKSEDSTEE) show a composition bias toward basic and acidic residues. The segment at 46–82 (KMGYEKMKSEDSTEEKSDEEEEDEEEEEEEEEDDDPE) is disordered. Acidic residues predominate over residues 61–82 (KSDEEEEDEEEEEEEEEDDDPE). TPR repeat units follow at residues 113–146 (ICKLKEEAVDLVENKKYEEALEKYNKIISFGNPS), 147–180 (AMIYTKRASILLNLKRPKACIRDCTEALNLNVDS), and 181–214 (ANAYKIRAKAYRYLGKWEFAHADMEQGQKIDYDE). A disordered region spans residues 260–301 (KKKAEKMYKENNKRENYDSDSSDSSYSEPDFSGDFPGGMPGG). The segment covering 264–276 (EKMYKENNKRENY) has biased composition (basic and acidic residues). The tract at residues 292-362 (GDFPGGMPGG…GMPGMPGGMP (71 aa)) is 19 X 3-4 AA approximate repeats. Residues 361 to 423 (MPDLNSPEMK…GGMMGEKPKP (63 aa)) form the STI1 domain.

It localises to the cytoplasm. May play a role in protein folding or protein-protein interactions. May act as a co-chaperone. This is 58 kDa phosphoprotein from Plasmodium berghei.